The following is a 175-amino-acid chain: CASP-like protein 2C1 (175 aa).

Topologically, residues 1–7 are cytoplasmic; it reads MVKLRET. The helical transmembrane segment at 8–28 threads the bilayer; it reads EVILRLCIVFFLLLTSCLIGL. Residues 29–45 are Extracellular-facing; that stretch reads DSQTKEIAYIHKNVSFR. Asparagine 41 carries an N-linked (GlcNAc...) asparagine glycan. A helical transmembrane segment spans residues 46 to 66; that stretch reads YLLALEAELYIDVVVAAYNLV. Residues 67 to 91 are Cytoplasmic-facing; the sequence is QLGLGWYNVEQKTSNPKWFSYLLDQ. Residues 92 to 112 traverse the membrane as a helical segment; sequence TAAYVVFAGTSAAAQHSLLVV. At 113–136 the chain is on the extracellular side; sequence TGSRELQWMKWCYKFTRFCFQMGS. The chain crosses the membrane as a helical span at residues 137–157; the sequence is AIILNYIAAALMVLLSSISAF. The Cytoplasmic portion of the chain corresponds to 158–175; the sequence is NLFRLYSPKRFFRFKSSS.

Belongs to the Casparian strip membrane proteins (CASP) family. Homodimer and heterodimers.

Its subcellular location is the cell membrane. This chain is CASP-like protein 2C1, found in Arabidopsis thaliana (Mouse-ear cress).